The chain runs to 543 residues: Formate--tetrahydrofolate ligase (543 aa).

54 to 61 contributes to the ATP binding site; the sequence is TPAGEGKT.

It belongs to the formate--tetrahydrofolate ligase family.

The catalysed reaction is (6S)-5,6,7,8-tetrahydrofolate + formate + ATP = (6R)-10-formyltetrahydrofolate + ADP + phosphate. It functions in the pathway one-carbon metabolism; tetrahydrofolate interconversion. In Thermus thermophilus (strain ATCC BAA-163 / DSM 7039 / HB27), this protein is Formate--tetrahydrofolate ligase.